Reading from the N-terminus, the 403-residue chain is Aspartic protease PEP1 (403 aa).

The N-terminal stretch at 1 to 20 is a signal peptide; the sequence is MVQISQIGAVLAVCSTLTVA. Residues 21–67 constitute a propeptide, activation peptide; the sequence is APTKGKARFNVPQVAVPMKAVHHPAVAYARALHKFGMKVPKAVSDAA. One can recognise a Peptidase A1 domain in the interval 82 to 400; it reads YVTQVTVGQG…DTEGPRIGFA (319 aa). The active site involves aspartate 98. 2 N-linked (GlcNAc...) asparagine glycosylation sites follow: asparagine 159 and asparagine 270. Aspartate 293 is an active-site residue. Cysteines 329 and 361 form a disulfide.

It belongs to the peptidase A1 family.

The protein resides in the secreted. It carries out the reaction Hydrolysis of proteins with broad specificity. Generally favors hydrophobic residues in P1 and P1', but also accepts Lys in P1, which leads to activation of trypsinogen. Does not clot milk.. In terms of biological role, secreted aspartic endopeptidase that allows assimilation of proteinaceous substrates. Can catalyze hydrolysis of the major structural proteins of basement membrane, elastin, collagen, and laminin. Thought to play a significant role in virulence. The chain is Aspartic protease PEP1 (PEP1) from Arthroderma benhamiae (strain ATCC MYA-4681 / CBS 112371) (Trichophyton mentagrophytes).